Consider the following 459-residue polypeptide: Phosphoglucosamine mutase (459 aa).

Ser100 acts as the Phosphoserine intermediate in catalysis. The Mg(2+) site is built by Ser100, Asp256, Asp258, and Asp260. The residue at position 100 (Ser100) is a Phosphoserine.

This sequence belongs to the phosphohexose mutase family. Mg(2+) is required as a cofactor. Post-translationally, activated by phosphorylation.

It catalyses the reaction alpha-D-glucosamine 1-phosphate = D-glucosamine 6-phosphate. Its function is as follows. Catalyzes the conversion of glucosamine-6-phosphate to glucosamine-1-phosphate. The protein is Phosphoglucosamine mutase of Heliobacterium modesticaldum (strain ATCC 51547 / Ice1).